The primary structure comprises 38 residues: Photosystem II reaction center protein L (38 aa).

Residues 17-37 form a helical membrane-spanning segment; sequence SLFWGLLLIFVLAVLFSNYFF.

This sequence belongs to the PsbL family. PSII is composed of 1 copy each of membrane proteins PsbA, PsbB, PsbC, PsbD, PsbE, PsbF, PsbH, PsbI, PsbJ, PsbK, PsbL, PsbM, PsbT, PsbX, PsbY, PsbZ, Psb30/Ycf12, at least 3 peripheral proteins of the oxygen-evolving complex and a large number of cofactors. It forms dimeric complexes.

It is found in the plastid. The protein localises to the chloroplast thylakoid membrane. Functionally, one of the components of the core complex of photosystem II (PSII). PSII is a light-driven water:plastoquinone oxidoreductase that uses light energy to abstract electrons from H(2)O, generating O(2) and a proton gradient subsequently used for ATP formation. It consists of a core antenna complex that captures photons, and an electron transfer chain that converts photonic excitation into a charge separation. This subunit is found at the monomer-monomer interface and is required for correct PSII assembly and/or dimerization. This Chaetosphaeridium globosum (Charophycean green alga) protein is Photosystem II reaction center protein L.